A 254-amino-acid polypeptide reads, in one-letter code: Acetylglutamate kinase (254 aa).

Substrate-binding positions include 40–41, Arg62, and Asn154; that span reads GG.

It belongs to the acetylglutamate kinase family. ArgB subfamily.

Its subcellular location is the cytoplasm. The catalysed reaction is N-acetyl-L-glutamate + ATP = N-acetyl-L-glutamyl 5-phosphate + ADP. The protein operates within amino-acid biosynthesis; L-arginine biosynthesis; N(2)-acetyl-L-ornithine from L-glutamate: step 2/4. Its function is as follows. Catalyzes the ATP-dependent phosphorylation of N-acetyl-L-glutamate. This Staphylococcus aureus (strain Mu3 / ATCC 700698) protein is Acetylglutamate kinase.